The primary structure comprises 85 residues: UPF0291 protein SGO_0570 (85 aa).

The disordered stretch occupies residues 56–85 (EDGNDVTPEKLRQVQREKGLHGRSLDDPNS). The segment covering 62-85 (TPEKLRQVQREKGLHGRSLDDPNS) has biased composition (basic and acidic residues).

It belongs to the UPF0291 family.

The protein resides in the cytoplasm. The sequence is that of UPF0291 protein SGO_0570 from Streptococcus gordonii (strain Challis / ATCC 35105 / BCRC 15272 / CH1 / DL1 / V288).